The following is a 1015-amino-acid chain: Probable beta-galactosidase B (1015 aa).

The first 20 residues, 1–20 (MAHIYRLLLLLLSNLWFSTA), serve as a signal peptide directing secretion. An N-linked (GlcNAc...) asparagine glycan is attached at Asn23. Tyr90 is a binding site for substrate. Residues Asn99 and Asn100 are each glycosylated (N-linked (GlcNAc...) asparagine). Residues Asn135, Ala136, and Glu137 each contribute to the substrate site. N-linked (GlcNAc...) asparagine glycosylation occurs at Asn172. Position 195 (Asn195) interacts with substrate. The Proton donor role is filled by Glu196. A glycan (N-linked (GlcNAc...) asparagine) is linked at Asn211. Substrate is bound at residue Tyr265. A disulfide bond links Cys271 and Cys324. The active-site Nucleophile is Glu308. Tyr373 contributes to the substrate binding site. Residues Asn411, Asn456, Asn554, Asn679, Asn735, Asn775, and Asn821 are each glycosylated (N-linked (GlcNAc...) asparagine).

The protein belongs to the glycosyl hydrolase 35 family.

It localises to the secreted. It catalyses the reaction Hydrolysis of terminal non-reducing beta-D-galactose residues in beta-D-galactosides.. In terms of biological role, cleaves beta-linked terminal galactosyl residues from gangliosides, glycoproteins, and glycosaminoglycans. This chain is Probable beta-galactosidase B (lacB), found in Aspergillus fumigatus (strain CBS 144.89 / FGSC A1163 / CEA10) (Neosartorya fumigata).